A 287-amino-acid chain; its full sequence is Probable endonuclease 4 (287 aa).

9 residues coordinate Zn(2+): H69, H109, E146, D180, H183, H217, D230, H232, and E262.

Belongs to the AP endonuclease 2 family. Zn(2+) serves as cofactor.

The catalysed reaction is Endonucleolytic cleavage to 5'-phosphooligonucleotide end-products.. Endonuclease IV plays a role in DNA repair. It cleaves phosphodiester bonds at apurinic or apyrimidinic (AP) sites, generating a 3'-hydroxyl group and a 5'-terminal sugar phosphate. In Petrotoga mobilis (strain DSM 10674 / SJ95), this protein is Probable endonuclease 4.